A 623-amino-acid chain; its full sequence is ATP-dependent lipid A-core flippase (623 aa).

Transmembrane regions (helical) follow at residues 66-86, 103-123, 190-210, 290-310, and 317-337; these read LVLAVLLMAGAAATQPTLAVI, VWFLPLAVVGLILLRGICNFF, LVVIALIGVLLYMSWALTLII, LTPLTQVCISVAVGAVIAVAL, and ALTVGSFASFMAALAQIFDPI. Positions 67–349 constitute an ABC transmembrane type-1 domain; that stretch reads VLAVLLMAGA…LTNLAGKMQK (283 aa). The 237-residue stretch at 382 to 618 folds into the ABC transporter domain; it reads VEFRAVSHRF…NGLYASLYNM (237 aa). Position 416–423 (416–423) interacts with ATP; it reads GRSGSGKT.

It belongs to the ABC transporter superfamily. Lipid exporter (TC 3.A.1.106) family. In terms of assembly, homodimer.

Its subcellular location is the cell inner membrane. It carries out the reaction ATP + H2O + lipid A-core oligosaccharideSide 1 = ADP + phosphate + lipid A-core oligosaccharideSide 2.. Involved in lipopolysaccharide (LPS) biosynthesis. Translocates lipid A-core from the inner to the outer leaflet of the inner membrane. Transmembrane domains (TMD) form a pore in the inner membrane and the ATP-binding domain (NBD) is responsible for energy generation. The protein is ATP-dependent lipid A-core flippase of Bordetella bronchiseptica (strain ATCC BAA-588 / NCTC 13252 / RB50) (Alcaligenes bronchisepticus).